The primary structure comprises 231 residues: Adenosine 5'-phosphosulfate reductase (231 aa).

Cysteine 118, cysteine 119, cysteine 201, and cysteine 204 together coordinate [4Fe-4S] cluster. Cysteine 227 (nucleophile; cysteine thiosulfonate intermediate) is an active-site residue.

Belongs to the PAPS reductase family. CysH subfamily. It depends on [4Fe-4S] cluster as a cofactor.

It is found in the cytoplasm. It catalyses the reaction [thioredoxin]-disulfide + sulfite + AMP + 2 H(+) = adenosine 5'-phosphosulfate + [thioredoxin]-dithiol. The protein operates within sulfur metabolism; hydrogen sulfide biosynthesis; sulfite from sulfate. Functionally, catalyzes the formation of sulfite from adenosine 5'-phosphosulfate (APS) using thioredoxin as an electron donor. This is Adenosine 5'-phosphosulfate reductase from Halalkalibacterium halodurans (strain ATCC BAA-125 / DSM 18197 / FERM 7344 / JCM 9153 / C-125) (Bacillus halodurans).